A 47-amino-acid chain; its full sequence is Delta-actitoxin-Axm1e (47 aa).

Intrachain disulfides connect Cys-4–Cys-44, Cys-6–Cys-34, and Cys-27–Cys-45.

Belongs to the sea anemone sodium channel inhibitory toxin family. Type I subfamily.

The protein localises to the secreted. It is found in the nematocyst. In terms of biological role, binds specifically to voltage-gated sodium channels (Nav), thereby delaying their inactivation. This toxin is active on a variety of voltage-gated sodium channels (Nav1.1/SCN1A, Nav1.2/SCN2A, Nav1.3/SCN3A, Nav1.4/SCN4A, Nav1.5/SCN5A and Nav1.6/SCN8A). In Anthopleura xanthogrammica (Giant green sea anemone), this protein is Delta-actitoxin-Axm1e.